We begin with the raw amino-acid sequence, 423 residues long: Serine--tRNA ligase (423 aa).

231–233 is a binding site for L-serine; the sequence is TAE. 262-264 serves as a coordination point for ATP; it reads RSE. Residue E285 coordinates L-serine. 349-352 is a binding site for ATP; sequence EISS. S384 contacts L-serine.

The protein belongs to the class-II aminoacyl-tRNA synthetase family. Type-1 seryl-tRNA synthetase subfamily. In terms of assembly, homodimer. The tRNA molecule binds across the dimer.

Its subcellular location is the cytoplasm. The enzyme catalyses tRNA(Ser) + L-serine + ATP = L-seryl-tRNA(Ser) + AMP + diphosphate + H(+). The catalysed reaction is tRNA(Sec) + L-serine + ATP = L-seryl-tRNA(Sec) + AMP + diphosphate + H(+). Its pathway is aminoacyl-tRNA biosynthesis; selenocysteinyl-tRNA(Sec) biosynthesis; L-seryl-tRNA(Sec) from L-serine and tRNA(Sec): step 1/1. In terms of biological role, catalyzes the attachment of serine to tRNA(Ser). Is also able to aminoacylate tRNA(Sec) with serine, to form the misacylated tRNA L-seryl-tRNA(Sec), which will be further converted into selenocysteinyl-tRNA(Sec). The sequence is that of Serine--tRNA ligase from Acinetobacter baylyi (strain ATCC 33305 / BD413 / ADP1).